Here is a 72-residue protein sequence, read N- to C-terminus: uncharacterized protein (72 aa).

This sequence belongs to the asfivirus I73R family.

The protein localises to the virion. This is an uncharacterized protein from Ornithodoros (relapsing fever ticks).